The primary structure comprises 167 residues: MTKRIRTALCVIVSVLFLASCSSRPDGMHVILFSDMQAGVQEKIKKAAEQNAGKVDIFPAFQEKLLTEITAHEGDVFIVPEDMFQAYDDPENFQPLNGLPPEKTSPYTTVNKKTGEKTIYAVQIEKGKKQLNGYSFQLNRDMAAFIPVYAEKTEEALQLISQLTEAR.

A signal peptide spans 1 to 20 (MTKRIRTALCVIVSVLFLAS). The N-palmitoyl cysteine moiety is linked to residue cysteine 21. The S-diacylglycerol cysteine moiety is linked to residue cysteine 21.

The protein resides in the cell membrane. Functionally, may play a role in the degradation of type I rhamnogalacturonan derived from plant cell walls. The chain is Putative lipoprotein YteS (yteS) from Bacillus subtilis (strain 168).